A 380-amino-acid polypeptide reads, in one-letter code: Cytochrome b (380 aa).

Helical transmembrane passes span 34–54 (FGSL…LLAT), 78–99 (WLIR…YLHI), 114–134 (WNTG…GYVL), and 179–199 (FFAL…IHLT). Heme b contacts are provided by histidine 84 and histidine 98. Heme b is bound by residues histidine 183 and histidine 197. Histidine 202 contacts a ubiquinone. Helical transmembrane passes span 227-247 (LKDI…ALFS), 289-309 (LGGV…PLLH), 321-341 (LSQL…WVGS), and 348-368 (FIII…ILFP).

Belongs to the cytochrome b family. The cytochrome bc1 complex contains 11 subunits: 3 respiratory subunits (MT-CYB, CYC1 and UQCRFS1), 2 core proteins (UQCRC1 and UQCRC2) and 6 low-molecular weight proteins (UQCRH/QCR6, UQCRB/QCR7, UQCRQ/QCR8, UQCR10/QCR9, UQCR11/QCR10 and a cleavage product of UQCRFS1). This cytochrome bc1 complex then forms a dimer. It depends on heme b as a cofactor.

The protein resides in the mitochondrion inner membrane. In terms of biological role, component of the ubiquinol-cytochrome c reductase complex (complex III or cytochrome b-c1 complex) that is part of the mitochondrial respiratory chain. The b-c1 complex mediates electron transfer from ubiquinol to cytochrome c. Contributes to the generation of a proton gradient across the mitochondrial membrane that is then used for ATP synthesis. This is Cytochrome b (MT-CYB) from Ciconia ciconia (White stork).